Reading from the N-terminus, the 470-residue chain is Glutamate--tRNA ligase (470 aa).

The short motif at 9 to 19 (PSPTGFLHVGG) is the 'HIGH' region element. The 'KMSKS' region signature appears at 236–240 (RLSKR). Residue K239 coordinates ATP.

Belongs to the class-I aminoacyl-tRNA synthetase family. Glutamate--tRNA ligase type 1 subfamily. In terms of assembly, monomer.

It localises to the cytoplasm. The enzyme catalyses tRNA(Glu) + L-glutamate + ATP = L-glutamyl-tRNA(Glu) + AMP + diphosphate. Its function is as follows. Catalyzes the attachment of glutamate to tRNA(Glu) in a two-step reaction: glutamate is first activated by ATP to form Glu-AMP and then transferred to the acceptor end of tRNA(Glu). The protein is Glutamate--tRNA ligase of Legionella pneumophila (strain Lens).